A 479-amino-acid chain; its full sequence is Beta-monoglucosyldiacylglycerol synthase (479 aa).

A run of 4 helical transmembrane segments spans residues 48-68 (AAVM…WVWG), 363-383 (FLLM…MALW), 389-409 (LLTP…YYGL), and 428-448 (LART…MPAV).

Belongs to the glycosyltransferase 2 family. It depends on Mg(2+) as a cofactor.

Its subcellular location is the membrane. The catalysed reaction is a 1,2-diacyl-sn-glycerol + UDP-alpha-D-glucose = a 1,2-diacyl-3-O-(beta-D-glucopyranosyl)-sn-glycerol + UDP + H(+). Its function is as follows. Glucosyltransferase involved in the biosynthesis of the non-bilayer-forming membrane lipid beta-monoglucosyldiacylglycerol which contributes to regulate the properties and stability of the membrane. Catalyzes the transfer of a glucosyl residue from UDP-Glc to diacylglycerol (DAG) acceptor to form the corresponding beta-glucosyl-DAG (1,2-diacyl-3-O-(beta-D-glucopyranosyl)-sn-glycerol). It can only use UDP-Glc as sugar donor. Two types of DAG (dipalmitoyl-DAG (DPDAG) and 1-oleoyl-2-palmitoyl-DAG (OPDAG)) can be used as sugar acceptors, but OPDAG is preferred. The sequence is that of Beta-monoglucosyldiacylglycerol synthase from Synechocystis sp. (strain ATCC 27184 / PCC 6803 / Kazusa).